Consider the following 249-residue polypeptide: 5'-nucleotidase SurE 2 (249 aa).

A divalent metal cation contacts are provided by D8, D9, S40, and N90.

It belongs to the SurE nucleotidase family. Requires a divalent metal cation as cofactor.

The protein localises to the cytoplasm. It carries out the reaction a ribonucleoside 5'-phosphate + H2O = a ribonucleoside + phosphate. In terms of biological role, nucleotidase that shows phosphatase activity on nucleoside 5'-monophosphates. The sequence is that of 5'-nucleotidase SurE 2 from Pyrobaculum aerophilum (strain ATCC 51768 / DSM 7523 / JCM 9630 / CIP 104966 / NBRC 100827 / IM2).